A 525-amino-acid polypeptide reads, in one-letter code: MTENIHKHRILILDFGSQYTQLVARRVRELGVYCELWAWDVTEAQIRDFNPSGIILSGGPESTTEENSPRAPQYVFEAGVPVFGVCYGMQTMAMQLGGHVEGSNEREFGYAQVEVLTDSALVRGIEDSLTADGKPLLDVWMSHGDKVTAIPSDFVTVASTESCPFAIMANEEKRFYGVQFHPEVTHTRQGMRMLERFVRDICQCEALWTPAKIIDDAVARIREQVGDDKVILGLSGGVDSSVTAMLLHRAIGKNLTCVFVDNGLLRLNEAEQVMDMFGDHFGLNIVHVPAEDRFLSALAGENDPEAKRKIIGRVFVEVFDEEALKLEDVKWLAQGTIYPDVIESAASATGKAHVIKSHHNVGGLPKEMKMGLVEPLKELFKDEVRKIGLELGLPYDMLYRHPFPGPGLGVRVLGEVKKEYCDLLRRADAIFIEELRKADLYDKVSQAFTVFLPVRSVGVMGDGRKYDWVVSLRAVETIDFMTAHWAHLPYDFLGRVSNRIINEVNGISRVVYDISGKPPATIEWE.

The Glutamine amidotransferase type-1 domain occupies 9–207 (RILILDFGSQ…VRDICQCEAL (199 aa)). Cys86 functions as the Nucleophile in the catalytic mechanism. Active-site residues include His181 and Glu183. A GMPS ATP-PPase domain is found at 208–400 (WTPAKIIDDA…LGLPYDMLYR (193 aa)). Residue 235–241 (SGGVDSS) coordinates ATP.

As to quaternary structure, homodimer.

It catalyses the reaction XMP + L-glutamine + ATP + H2O = GMP + L-glutamate + AMP + diphosphate + 2 H(+). It functions in the pathway purine metabolism; GMP biosynthesis; GMP from XMP (L-Gln route): step 1/1. Catalyzes the synthesis of GMP from XMP. This chain is GMP synthase [glutamine-hydrolyzing], found in Salmonella typhi.